The sequence spans 476 residues: MVSSKKTIDKNKTQVIGKIIQVLGPVVDVKFSENNIPKIYDALVVDNNGKKLVLEVEQNIGDEIVRTIAMGPTEGLRRGLDVINTNSPITAPVGNEVLGRMFNVLGDPIDEKPDLDVKRLPIHRDAPIYEELVTTTEILETGIKVIDLMIPFTKGGKVGLFGGAGVGKTILIQELINNIAKAHNGVSVFAGVGERTREGNDLYHEFIEAGVLNKTCLVFGQMNEPPGARMRVALTGLTIAEYFRDKKNMDVLLFIDNIFRFTQAGSEVSALLGRMPSAVGYQPTLSTEMGSLQERITSTKNGSITSVQAVYVPADDLTDPAPATTFTHLDARIVLDRSIASLGIYPAVDPLASSSRVLDPEIVGQEHYDIALKVQITLQKYQELQSIIAILGMDELSEEDKLIVQRARKIRNFLSQSFFVGEKFTGRPGVFVKVSDTVRSFKSILNGEVDHVPETYFLYSSTIDNVIEKYNKDKDK.

Residue Gly162–Thr169 participates in ATP binding.

The protein belongs to the ATPase alpha/beta chains family. F-type ATPases have 2 components, CF(1) - the catalytic core - and CF(0) - the membrane proton channel. CF(1) has five subunits: alpha(3), beta(3), gamma(1), delta(1), epsilon(1). CF(0) has three main subunits: a(1), b(2) and c(9-12). The alpha and beta chains form an alternating ring which encloses part of the gamma chain. CF(1) is attached to CF(0) by a central stalk formed by the gamma and epsilon chains, while a peripheral stalk is formed by the delta and b chains.

It is found in the cell membrane. The enzyme catalyses ATP + H2O + 4 H(+)(in) = ADP + phosphate + 5 H(+)(out). Its function is as follows. Produces ATP from ADP in the presence of a proton gradient across the membrane. The catalytic sites are hosted primarily by the beta subunits. This chain is ATP synthase subunit beta, found in Mycoplasma capricolum subsp. capricolum (strain California kid / ATCC 27343 / NCTC 10154).